The primary structure comprises 233 residues: MSIGKLHKQAKEKVDRSQVYPIGEALALVKEVAHAKFDETVEISVRLGVDPRKADQMVRGAVVLPNGLGKDVKVLVFAKGEKAIEAKEAGADYVGGDDLVAKIQEGWFDFDTAIATPDMMGTVGKIGRLLGPRGLMPNPKVGTVTFEVGKATSEAKSGKVEYRVEKAGIVHAPVGKVSFDAEKLQENLVALFDALVKAKPATAKGTYFKKMSLSSTMGPGINVDLPTVQALVK.

The protein belongs to the universal ribosomal protein uL1 family. As to quaternary structure, part of the 50S ribosomal subunit.

Binds directly to 23S rRNA. The L1 stalk is quite mobile in the ribosome, and is involved in E site tRNA release. Its function is as follows. Protein L1 is also a translational repressor protein, it controls the translation of the L11 operon by binding to its mRNA. In Syntrophotalea carbinolica (strain DSM 2380 / NBRC 103641 / GraBd1) (Pelobacter carbinolicus), this protein is Large ribosomal subunit protein uL1.